Reading from the N-terminus, the 2344-residue chain is Mucin-4 (2344 aa).

An N-terminal signal peptide occupies residues 1–30; the sequence is MRGPHGVSWRVPWLCLSCLCSCLLLLPVNT. Low complexity predominate over residues 32–46; sequence TTSAPKTSTALPSST. 5 disordered regions span residues 32–760, 773–1036, 1072–1130, 1171–1197, and 1233–1269; these read TTSA…QGSI, QKMS…TTST, VPSL…TPSV, STVA…MGAS, and SGLT…TVPP. Residues 47–100 show a composition bias toward polar residues; the sequence is NPSQMTSQVSNPTASSYRMTKNTGQASPMVTSSSITTLPQSQHTGSMKTTRNPQ. A variable number of tandem repeats (VNTR) region spans residues 81-1006; it reads ITTLPQSQHT…VSTLVTSTQE (926 aa). Composition is skewed to low complexity over residues 101–116 and 123–137; these read TTGT…ASSS and TTSQ…TTTS. Residue Thr133 is glycosylated (O-linked (GalNAc...) threonine). Over residues 142–225 the composition is skewed to polar residues; that stretch reads ESSSPPSTSV…GGMKTTRNPQ (84 aa). Low complexity predominate over residues 226 to 273; it reads TTGTTEVTTTLSASSSDHPTSSPESTPGNTAPRTTETSTTTTTKVLMT. Residues 274-305 show a composition bias toward polar residues; sequence SLQQKLPTGSTLGTSTQELTTLPQSQHTGIMK. Composition is skewed to low complexity over residues 306–322 and 335–349; these read TTSR…TTRT and TSSQ…TTTS. The span at 373–436 shows a compositional bias: polar residues; sequence SGDTGHTMAV…GMKTTRNPQR (64 aa). O-linked (GalNAc...) threonine glycosylation is found at Thr391 and Thr392. Residues 437–446 are compositionally biased toward low complexity; sequence TTPTEVTTST. Positions 447-468 are enriched in polar residues; that stretch reads LSASSSDQVQVETTSRATLSPD. Over residues 469–492 the composition is skewed to low complexity; sequence TTTTSHAPSVSSSSPSPPSTEGTS. Residue Thr470 is glycosylated (O-linked (GalNAc...) threonine). Ser479 carries an O-linked (GalNAc...) serine glycan. A compositionally biased stretch (polar residues) spans 493–509; the sequence is VDTGLTTAVTTQDSTPA. Residues 510–546 show a composition bias toward low complexity; the sequence is TTQGSLTSSSQTLSTVSPLSTSTQETSTQELTSSQSQ. Over residues 547 to 580 the composition is skewed to polar residues; that stretch reads HTGSMKTTHNPQTTRNTEVTTTLSASSSDQVQVE. The span at 581 to 594 shows a compositional bias: low complexity; that stretch reads TTSQTTLSDATTTS. A compositionally biased stretch (polar residues) spans 599–682; it reads ESSSPPSTSD…GGMKTTRNPQ (84 aa). 2 stretches are compositionally biased toward low complexity: residues 683 to 698 and 705 to 719; these read TTGT…ASSS and TSSQ…TTTS. Polar residues-rich tracts occupy residues 724 to 760 and 773 to 807; these read ESSS…QGSI and QKMS…SSRP. The segment covering 808–828 has biased composition (low complexity); it reads QTTSVTSTLSSSPSGSTPVQT. The segment covering 829–868 has biased composition (polar residues); the sequence is RSVTSSSDERTNPTSSGVSNTSPATTEVLTPTSSPESTPG. The segment covering 869 to 915 has biased composition (low complexity); the sequence is NTAPRTTETSTTTTTKVLMTSLQQKLPTGSTLGTSTPTEVTTTLSAS. Positions 916–994 are enriched in polar residues; sequence SSDQVQVETT…ISVTPSTQKM (79 aa). Positions 995–1015 are enriched in low complexity; the sequence is STVSTLVTSTQELTSSQSQRT. Over residues 1016–1026 the composition is skewed to polar residues; that stretch reads GSMGTSSKPQA. Over residues 1027-1036 the composition is skewed to low complexity; it reads TTPTEVTTST. The span at 1072–1083 shows a compositional bias: polar residues; it reads VPSLMHSSKPQA. Residues 1084-1096 show a composition bias toward low complexity; it reads TTPTEVTTSTLSS. The span at 1097-1116 shows a compositional bias: polar residues; it reads FSRGSTQTQTVSWETSSSGK. Low complexity-rich tracts occupy residues 1118-1130, 1175-1188, and 1233-1267; these read TAPS…TPSV, HRQS…HSQS, and SGLT…RSTV. The 161-residue stretch at 1332–1492 folds into the NIDO domain; it reads GHSGVMLISL…TGYTGRCGPT (161 aa). The segment at 1574 to 1597 is disordered; sequence GRHRTGLAAGTTSPLSASSTSSGG. Residues 1580–1597 show a composition bias toward low complexity; that stretch reads LAAGTTSPLSASSTSSGG. Residues 1609-1804 form the VWFD domain; sequence RPAWTFGDPH…HYGMTSETNG (196 aa). 19 N-linked (GlcNAc...) asparagine glycosylation sites follow: Asn1644, Asn1660, Asn1672, Asn1689, Asn1698, Asn1704, Asn1715, Asn1724, Asn1759, Asn1780, Asn1787, Asn1829, Asn1874, Asn1926, Asn1951, Asn1974, Asn1981, Asn2029, and Asn2048. Residues 2047–2086 enclose the EGF-like 1 domain; the sequence is QNHSCPVNYCYNHGHCDISGPPDCQPTCTCAPAFTGNRCF. 3 disulfides stabilise this stretch: Cys2051/Cys2062, Cys2056/Cys2074, and Cys2076/Cys2085. 2 N-linked (GlcNAc...) asparagine glycosylation sites follow: Asn2114 and Asn2121. Residues 2173-2193 traverse the membrane as a helical segment; it reads GPLIHYLNNQLISAVMEAFLL. The N-linked (GlcNAc...) asparagine glycan is linked to Asn2227. Positions 2256-2295 constitute an EGF-like 2 domain; the sequence is VSPCSEGYCHNGGQCKHLPDGPQCTCATFSIYTSWGERCE. 3 disulfides stabilise this stretch: Cys2259–Cys2270, Cys2264–Cys2279, and Cys2281–Cys2294. Residues 2301–2321 form a helical membrane-spanning segment; the sequence is LGAFFGILFGALGALLLLAIL.

In terms of assembly, a heterodimeric complex, composed of a mucin-4 alpha chain and a cysteine-rich transmembrane mucin-4 beta chain. Mucin-4 beta chain interacts with ERBB2 via the EGF-like domain 1. In nonpolarized cells, associates with ERBB2 and ERBB3. In terms of processing, proteolytically cleaved into 2 subunits, mucin-4 alpha chain and mucin-4 beta chain. Mucin-4 alpha subunit is highly O-glycosylated. Post-translationally, mucin-4 beta subunit is predominantly N-glycosylated. Expression is developmentally regulated in the mammary gland, dramatically increases in the lactating gland compared with the virgin mammary gland, while decreasing again during mammary gland involution. Expressed in 13762 ascites cells. Overexpressed in some aggressive mammary tumors. Overexpression seems to block cell-cell and cell-matrix interactions to protect tumor cells from immune surveillance, and to promote metastasis.

Its subcellular location is the cell membrane. The protein localises to the secreted. Membrane-bound mucin, a family of highly glycosylated proteins that constitute the major component of the mucus, the slimy and viscous secretion covering epithelial surfaces. These glycoproteins play important roles in the protection of the epithelium and are implicated in epithelial renewal and differentiation. Regulates cellular behavior through both anti-adhesive effects on cell-cell and cell-extracellular matrix interactions and its ability to act as an intramembrane ligand for ERBB2. Plays an important role in proliferation and differentiation of epithelial cells by inducing specific phosphorylation of ERBB2. In polarized epithelial cells, segregates ERBB2 and other ERBB receptors and prevents ERBB2 from acting as a coreceptor. The interaction with ERBB2 leads to enhanced expression of CDKN1B. The formation of a MUC4-ERBB2-ERBB3-NRG1 complex leads to down-regulation of CDKN1B, resulting in repression of apoptosis and stimulation of proliferation. Its ability to promote tumor growth may be mainly due to repression of apoptosis as opposed to proliferation. In Rattus norvegicus (Rat), this protein is Mucin-4 (Muc4).